A 138-amino-acid polypeptide reads, in one-letter code: Nucleoside diphosphate kinase (138 aa).

ATP-binding residues include lysine 11, phenylalanine 59, arginine 87, threonine 93, arginine 104, and asparagine 114. Residue histidine 117 is the Pros-phosphohistidine intermediate of the active site.

The protein belongs to the NDK family. The cofactor is Mg(2+).

The protein localises to the cytoplasm. It carries out the reaction a 2'-deoxyribonucleoside 5'-diphosphate + ATP = a 2'-deoxyribonucleoside 5'-triphosphate + ADP. It catalyses the reaction a ribonucleoside 5'-diphosphate + ATP = a ribonucleoside 5'-triphosphate + ADP. In terms of biological role, major role in the synthesis of nucleoside triphosphates other than ATP. The ATP gamma phosphate is transferred to the NDP beta phosphate via a ping-pong mechanism, using a phosphorylated active-site intermediate. The protein is Nucleoside diphosphate kinase of Saccharolobus solfataricus (strain ATCC 35092 / DSM 1617 / JCM 11322 / P2) (Sulfolobus solfataricus).